Consider the following 261-residue polypeptide: tRNA pseudouridine synthase A (261 aa).

The Nucleophile role is filled by D51. A substrate-binding site is contributed by Y109.

The protein belongs to the tRNA pseudouridine synthase TruA family. Homodimer.

The enzyme catalyses uridine(38/39/40) in tRNA = pseudouridine(38/39/40) in tRNA. Formation of pseudouridine at positions 38, 39 and 40 in the anticodon stem and loop of transfer RNAs. This is tRNA pseudouridine synthase A from Shewanella sp. (strain MR-7).